The chain runs to 760 residues: Mitochondrial intermediate peptidase (760 aa).

The N-terminal 19 residues, 1–19 (MLARSVRTLVVSPKTVFRF), are a transit peptide targeting the mitochondrion. His543 contacts Zn(2+). Residue Glu544 is part of the active site. Residue His547 coordinates Zn(2+).

Belongs to the peptidase M3 family. Zn(2+) is required as a cofactor.

The protein localises to the mitochondrion matrix. The catalysed reaction is Release of an N-terminal octapeptide as second stage of processing of some proteins imported into the mitochondrion.. Functionally, cleaves proteins, imported into the mitochondrion, to their mature size. While most mitochondrial precursor proteins are processed to the mature form in one step by mitochondrial processing peptidase (MPP), the sequential cleavage by MIP of an octapeptide after initial processing by MPP is a required step for a subgroup of nuclear-encoded precursor proteins destined for the matrix or the inner membrane. The sequence is that of Mitochondrial intermediate peptidase (OCT1) from Leucoagaricus gongylophorus (Leaf-cutting ant fungus).